The following is a 246-amino-acid chain: Nuclear transcription factor Y subunit C-2 (246 aa).

Disordered regions lie at residues 1–35 (MDNQQLPYAGQPAAAGAGAPVPGVPGAGGPPAVPH) and 205–246 (QQGA…PSSE). Residues 9–21 (AGQPAAAGAGAPV) show a composition bias toward low complexity.

The protein belongs to the NFYC/HAP5 subunit family. Heterotrimeric transcription factor composed of three components, NF-YA, NF-YB and NF-YC. NF-YB and NF-YC must interact and dimerize for NF-YA association and DNA binding. Interacts with NFYB8, NFYB10 and HD5/NFYB11.

The protein resides in the nucleus. Its subcellular location is the cytoplasm. Probable transcription factor involved in the regulation of flowering time under long day (LD) conditions. Functions as a repressor of flowering, independently of HD1 and GHD7. Controls flowering time by negatively regulating the expression of EHD1 and HD3A. Component of the NF-Y/HAP transcription factor complex. The chain is Nuclear transcription factor Y subunit C-2 from Oryza sativa subsp. japonica (Rice).